A 259-amino-acid chain; its full sequence is MELLAKTRKLNALLQSAAGKPVNFREMSDTMCEVIEANVFVVSRRGKLLGYAIHQQIENERMKQMLAERQFPEEYTQSLFNITETSSNLDVNSAYTAFPVENKELFGQGLTTIVPIVGGGERLGTLVLARLGQEFLDDDLILAEYSSTVVGMEILREKAEEIEEEARSKAVVQMAISSLSYSELEAIEHIFEELNGTEGLLVASKIADRVGITRSVIVNALRKLESAGVIESRSLGMKGTYIKVLNDKFLHELAXLKTN.

The GAF domain stretch occupies residues 1–155 (MELLAKTRKL…SSTVVGMEIL (155 aa)). The H-T-H motif DNA-binding region spans 203-222 (ASKIADRVGITRSVIVNALR). Ser-215 is subject to Phosphoserine.

This sequence belongs to the CodY family.

The protein localises to the cytoplasm. In terms of biological role, DNA-binding global transcriptional regulator which is involved in the adaptive response to starvation and acts by directly or indirectly controlling the expression of numerous genes in response to nutrient availability. During rapid exponential growth, CodY is highly active and represses genes whose products allow adaptation to nutrient depletion. The protein is Global transcriptional regulator CodY of Bacillus cereus (strain ATCC 10987 / NRS 248).